The following is a 1357-amino-acid chain: DNA-directed RNA polymerase subunit beta (1357 aa).

Belongs to the RNA polymerase beta chain family. In terms of assembly, the RNAP catalytic core consists of 2 alpha, 1 beta, 1 beta' and 1 omega subunit. When a sigma factor is associated with the core the holoenzyme is formed, which can initiate transcription.

It catalyses the reaction RNA(n) + a ribonucleoside 5'-triphosphate = RNA(n+1) + diphosphate. Functionally, DNA-dependent RNA polymerase catalyzes the transcription of DNA into RNA using the four ribonucleoside triphosphates as substrates. The chain is DNA-directed RNA polymerase subunit beta from Pseudomonas syringae pv. tomato (strain ATCC BAA-871 / DC3000).